The sequence spans 154 residues: SsrA-binding protein (154 aa).

A disordered region spans residues 131–154 (DKRQDLKQKEAKRDIERAFKERQQ). The segment covering 132 to 154 (KRQDLKQKEAKRDIERAFKERQQ) has biased composition (basic and acidic residues).

This sequence belongs to the SmpB family.

It is found in the cytoplasm. Functionally, required for rescue of stalled ribosomes mediated by trans-translation. Binds to transfer-messenger RNA (tmRNA), required for stable association of tmRNA with ribosomes. tmRNA and SmpB together mimic tRNA shape, replacing the anticodon stem-loop with SmpB. tmRNA is encoded by the ssrA gene; the 2 termini fold to resemble tRNA(Ala) and it encodes a 'tag peptide', a short internal open reading frame. During trans-translation Ala-aminoacylated tmRNA acts like a tRNA, entering the A-site of stalled ribosomes, displacing the stalled mRNA. The ribosome then switches to translate the ORF on the tmRNA; the nascent peptide is terminated with the 'tag peptide' encoded by the tmRNA and targeted for degradation. The ribosome is freed to recommence translation, which seems to be the essential function of trans-translation. The polypeptide is SsrA-binding protein (Listeria innocua serovar 6a (strain ATCC BAA-680 / CLIP 11262)).